We begin with the raw amino-acid sequence, 912 residues long: Ubiquitin carboxyl-terminal hydrolase 20 (912 aa).

The segment at 6–111 adopts a UBP-type zinc-finger fold; the sequence is DLCPHLDSIG…GPAPKFSEQD (106 aa). Zn(2+) is bound by residues cysteine 8, histidine 10, cysteine 30, cysteine 33, cysteine 43, cysteine 48, cysteine 53, histidine 60, histidine 64, histidine 70, cysteine 83, and cysteine 86. The tract at residues 101–120 is disordered; it reads PGPAPKFSEQDSPPPSHPLK. Phosphoserine occurs at positions 112, 132, and 134. The region spanning 145–683 is the USP domain; sequence TGMKNLGNSC…EAYVLFYRKS (539 aa). Cysteine 154 serves as the catalytic Nucleophile. Disordered stretches follow at residues 258 to 308 and 322 to 415; these read LTEA…GSQA and ISEK…ASPV. Threonine 259 carries the phosphothreonine modification. Residues 260–280 show a composition bias toward basic and acidic residues; that stretch reads EARDSDSSDTDEKREGDRSPS. The residue at position 306 (serine 306) is a Phosphoserine. Basic and acidic residues predominate over residues 322-333; it reads ISEKERMKDRKF. The residue at position 369 (serine 369) is a Phosphoserine. Threonine 378 is modified (phosphothreonine). Residues serine 408 and serine 413 each carry the phosphoserine modification. The active-site Proton acceptor is histidine 641. DUSP domains are found at residues 685–778 and 787–890; these read EEAV…LYVC and ALAK…RQSV.

Belongs to the peptidase C19 family. USP20/USP33 subfamily. In terms of assembly, interacts with VHL, leading to its ubiquitination and subsequent degradation. Interacts with CCP110. Interacts with DIO2. Interacts with HIF1A. Interacts with ADRB2. Interacts with USP18. Ubiquitinated via a VHL-dependent pathway for proteasomal degradation.

The protein resides in the cytoplasm. The protein localises to the endoplasmic reticulum. It is found in the perinuclear region. It localises to the cytoskeleton. Its subcellular location is the microtubule organizing center. The protein resides in the centrosome. The catalysed reaction is Thiol-dependent hydrolysis of ester, thioester, amide, peptide and isopeptide bonds formed by the C-terminal Gly of ubiquitin (a 76-residue protein attached to proteins as an intracellular targeting signal).. Deubiquitinating enzyme that plays a role in many cellular processes including autophagy, cellular antiviral response or membrane protein biogenesis. Attenuates TLR4-mediated NF-kappa-B signaling by cooperating with beta-arrestin-2/ARRB2 and inhibiting TRAF6 autoubiquitination. Promotes cellular antiviral responses by deconjugating 'Lys-33' and 'Lys-48'-linked ubiquitination of STING1 leading to its stabilization. Plays an essential role in autophagy induction by regulating the ULK1 stability through deubiquitination of ULK1. Acts as a positive regulator for NF-kappa-B activation by TNF-alpha through deubiquitinating 'Lys-48'-linked polyubiquitination of SQSTM1, leading to its increased stability. Acts as a regulator of G-protein coupled receptor (GPCR) signaling by mediating the deubiquitination beta-2 adrenergic receptor (ADRB2). Plays a central role in ADRB2 recycling and resensitization after prolonged agonist stimulation by constitutively binding ADRB2, mediating deubiquitination of ADRB2 and inhibiting lysosomal trafficking of ADRB2. Upon dissociation, it is probably transferred to the translocated beta-arrestins, possibly leading to beta-arrestins deubiquitination and disengagement from ADRB2. This suggests the existence of a dynamic exchange between the ADRB2 and beta-arrestins. Deubiquitinates DIO2, thereby regulating thyroid hormone regulation. Deubiquitinates HIF1A, leading to stabilize HIF1A and enhance HIF1A-mediated activity. Deubiquitinates MCL1, a pivotal member of the anti-apoptotic Bcl-2 protein family to regulate its stability. Within the endoplasmic reticulum, participates with USP33 in the rescue of post-translationally targeted membrane proteins that are inappropriately ubiquitinated by the cytosolic protein quality control in the cytosol. In Bos taurus (Bovine), this protein is Ubiquitin carboxyl-terminal hydrolase 20 (USP20).